Here is a 506-residue protein sequence, read N- to C-terminus: ATP synthase subunit alpha (506 aa).

170 to 177 (GDRQTGKT) serves as a coordination point for ATP.

This sequence belongs to the ATPase alpha/beta chains family. As to quaternary structure, F-type ATPases have 2 components, CF(1) - the catalytic core - and CF(0) - the membrane proton channel. CF(1) has five subunits: alpha(3), beta(3), gamma(1), delta(1), epsilon(1). CF(0) has four main subunits: a(1), b(1), b'(1) and c(9-12).

The protein resides in the cellular thylakoid membrane. It catalyses the reaction ATP + H2O + 4 H(+)(in) = ADP + phosphate + 5 H(+)(out). In terms of biological role, produces ATP from ADP in the presence of a proton gradient across the membrane. The alpha chain is a regulatory subunit. This is ATP synthase subunit alpha from Synechococcus sp. (strain CC9902).